The primary structure comprises 503 residues: Endoglycoceramidase (503 aa).

Positions M1–G21 are cleaved as a signal peptide. N72, N108, and N205 each carry an N-linked (GlcNAc...) asparagine glycan. The active-site Proton donor is the E239. N-linked (GlcNAc...) asparagine glycans are attached at residues N307, N409, and N485.

Belongs to the glycosyl hydrolase 5 (cellulase A) family.

Its subcellular location is the secreted. It is found in the nematocyst. The catalysed reaction is an oligoglycosyl-(1-&gt;4)-beta-D-glucosyl-(1&lt;-&gt;1)-ceramide + H2O = an oligoglycosyl-(1-&gt;4)-D-glucose + an N-acyl-sphingoid base. Its activity is regulated as follows. Completely inhibited by Hg(2+). Cu(2+) and zinc have no effect on enzyme activity. Lithium, potassium, manganese, Ni(2+), calcium, magnesium and EDTA have no significant effect on enzyme activity. Enzyme requires presence of detergents such as Triton X-100 and Lubrol PX for the hydrolysis of glycosphingolipids. Taurodeoxycholate strongly inhibits the enzyme activity and SDS completely inhibits the enzyme activity. Hydrolysis of the glycosidic linkage between oligosaccharides and ceramides of glycosphingolipids, especially b-series polysialogangliosides. The chain is Endoglycoceramidase from Cyanea nozakii (Jellyfish).